A 387-amino-acid polypeptide reads, in one-letter code: Phosphoglycerate kinase (387 aa).

Residues 21–23 (DLN), Arg36, 59–62 (HLGR), Arg113, and Arg146 each bind substrate. ATP-binding positions include Lys197, Glu314, and 340–343 (GGDT).

Belongs to the phosphoglycerate kinase family. Monomer.

It is found in the cytoplasm. It carries out the reaction (2R)-3-phosphoglycerate + ATP = (2R)-3-phospho-glyceroyl phosphate + ADP. It participates in carbohydrate degradation; glycolysis; pyruvate from D-glyceraldehyde 3-phosphate: step 2/5. The sequence is that of Phosphoglycerate kinase from Pseudomonas putida (strain GB-1).